A 128-amino-acid chain; its full sequence is NADH-quinone oxidoreductase subunit A (128 aa).

3 consecutive transmembrane segments (helical) span residues 12–32, 66–86, and 96–116; these read FAIFIISAIILCVLILTLSFL, FYLIAIFFVLFDIEAFYLYAW, and LGFYEAIIFVSVLLSGLVYLV.

This sequence belongs to the complex I subunit 3 family. NDH-1 is composed of 14 different subunits. Subunits NuoA, H, J, K, L, M, N constitute the membrane sector of the complex.

The protein localises to the cell membrane. The enzyme catalyses a quinone + NADH + 5 H(+)(in) = a quinol + NAD(+) + 4 H(+)(out). NDH-1 shuttles electrons from NADH, via FMN and iron-sulfur (Fe-S) centers, to quinones in the respiratory chain. The immediate electron acceptor for the enzyme in this species is believed to be ubiquinone. Couples the redox reaction to proton translocation (for every two electrons transferred, four hydrogen ions are translocated across the cytoplasmic membrane), and thus conserves the redox energy in a proton gradient. In Baumannia cicadellinicola subsp. Homalodisca coagulata, this protein is NADH-quinone oxidoreductase subunit A.